Here is a 347-residue protein sequence, read N- to C-terminus: N-acetyl-gamma-glutamyl-phosphate reductase (347 aa).

Cysteine 152 is an active-site residue.

Belongs to the NAGSA dehydrogenase family. Type 1 subfamily.

Its subcellular location is the cytoplasm. The catalysed reaction is N-acetyl-L-glutamate 5-semialdehyde + phosphate + NADP(+) = N-acetyl-L-glutamyl 5-phosphate + NADPH + H(+). Its pathway is amino-acid biosynthesis; L-arginine biosynthesis; N(2)-acetyl-L-ornithine from L-glutamate: step 3/4. Functionally, catalyzes the NADPH-dependent reduction of N-acetyl-5-glutamyl phosphate to yield N-acetyl-L-glutamate 5-semialdehyde. The polypeptide is N-acetyl-gamma-glutamyl-phosphate reductase (Neisseria gonorrhoeae (strain ATCC 700825 / FA 1090)).